The following is a 604-amino-acid chain: uncharacterized protein (604 aa).

One can recognise an ABC transmembrane type-1 domain in the interval 45–329 (LPLSFLTVLI…LGQVYNQLLM (285 aa)). Transmembrane regions (helical) follow at residues 49-69 (FLTV…IGVY), 82-102 (LLIQ…AANV), 162-182 (VINL…LFTL), 184-204 (PELT…STSL), 273-293 (LVEM…ATLI), and 297-317 (TITI…WEPI). An ABC transporter domain is found at 363–597 (ISFEEVEFSY…GGIYAGLVKA (235 aa)). ATP is bound at residue 396-403 (GHTGSGKT).

It belongs to the ABC transporter superfamily.

It localises to the cell membrane. This is an uncharacterized protein from Bacillus subtilis (strain 168).